The primary structure comprises 554 residues: 3-(3-hydroxy-phenyl)propionate/3-hydroxycinnamic acid hydroxylase (554 aa).

FAD-binding positions include Gln-17–Lys-46 and Phe-285–Asp-295.

The protein belongs to the PheA/TfdB FAD monooxygenase family. It depends on FAD as a cofactor.

The enzyme catalyses 3-(3-hydroxyphenyl)propanoate + NADH + O2 + H(+) = 3-(2,3-dihydroxyphenyl)propanoate + NAD(+) + H2O. The catalysed reaction is (2E)-3-(3-hydroxyphenyl)prop-2-enoate + NADH + O2 + H(+) = (2E)-3-(2,3-dihydroxyphenyl)prop-2-enoate + NAD(+) + H2O. The protein operates within aromatic compound metabolism; 3-phenylpropanoate degradation. In terms of biological role, catalyzes the insertion of one atom of molecular oxygen into position 2 of the phenyl ring of 3-(3-hydroxyphenyl)propionate (3-HPP) and hydroxycinnamic acid (3HCI). The protein is 3-(3-hydroxy-phenyl)propionate/3-hydroxycinnamic acid hydroxylase of Escherichia coli O139:H28 (strain E24377A / ETEC).